Consider the following 206-residue polypeptide: AT-hook motif nuclear-localized protein 28 (206 aa).

Disordered regions lie at residues 1 to 21 and 160 to 206; these read METVGRPRGRPRGSKNKPKAP and TEEE…PSPY. A DNA-binding region (a.T hook) is located at residues 5 to 17; the sequence is GRPRGRPRGSKNK. Positions 7 to 18 are enriched in basic residues; it reads PRGRPRGSKNKP. The PPC domain maps to 27 to 173; it reads DPPMSPYILE…QRNSAEGEEE (147 aa).

The protein resides in the nucleus. In terms of biological role, transcription factor that specifically binds AT-rich DNA sequences related to the nuclear matrix attachment regions (MARs). This chain is AT-hook motif nuclear-localized protein 28, found in Arabidopsis thaliana (Mouse-ear cress).